Consider the following 39-residue polypeptide: Photosystem II reaction center protein Y (39 aa).

A helical membrane pass occupies residues Val7–Ile25.

This sequence belongs to the PsbY family. As to quaternary structure, PSII is composed of 1 copy each of membrane proteins PsbA, PsbB, PsbC, PsbD, PsbE, PsbF, PsbH, PsbI, PsbJ, PsbK, PsbL, PsbM, PsbT, PsbX, PsbY, PsbZ, Psb30/Ycf12, peripheral proteins PsbO, CyanoQ (PsbQ), PsbU, PsbV and a large number of cofactors. It forms dimeric complexes.

Its subcellular location is the cellular thylakoid membrane. Functionally, loosely associated component of the core of photosystem II (PSII), it is not always seen in crystals. PSII is a light-driven water plastoquinone oxidoreductase, using light energy to abstract electrons from H(2)O, generating a proton gradient subsequently used for ATP formation. This is Photosystem II reaction center protein Y from Cyanothece sp. (strain PCC 7425 / ATCC 29141).